Consider the following 330-residue polypeptide: Cyclin-dependent kinase 7 (330 aa).

The 285-residue stretch at 5 to 289 (YDTIKHLGEG…CTQSLQMEYF (285 aa)) folds into the Protein kinase domain. ATP is bound by residues 11-19 (LGEGQFANV) and Lys34. The active-site Proton acceptor is the Asp130. Residue Thr163 is modified to Phosphothreonine. The disordered stretch occupies residues 305-330 (KKQQPQKRSRRLDDDGTRPVRRLNFD). Basic and acidic residues predominate over residues 315–330 (RLDDDGTRPVRRLNFD).

The protein belongs to the protein kinase superfamily. CMGC Ser/Thr protein kinase family. CDC2/CDKX subfamily. As to quaternary structure, catalytic component which, in association with cyclin H (cyh-1) and mat1, is likely to form the CAK complex.

It carries out the reaction L-seryl-[protein] + ATP = O-phospho-L-seryl-[protein] + ADP + H(+). The enzyme catalyses L-threonyl-[protein] + ATP = O-phospho-L-threonyl-[protein] + ADP + H(+). It catalyses the reaction [DNA-directed RNA polymerase] + ATP = phospho-[DNA-directed RNA polymerase] + ADP + H(+). Its function is as follows. Serine/threonine kinase involved in cell cycle control and in RNA polymerase II-mediated RNA transcription. Required for maintaining chromosome ploidy. May phosphorylate the large subunit of RNA polymerase II, ama-1. This is Cyclin-dependent kinase 7 from Caenorhabditis elegans.